The primary structure comprises 74 residues: Exodeoxyribonuclease 7 small subunit (74 aa).

It belongs to the XseB family. In terms of assembly, heterooligomer composed of large and small subunits.

It localises to the cytoplasm. The enzyme catalyses Exonucleolytic cleavage in either 5'- to 3'- or 3'- to 5'-direction to yield nucleoside 5'-phosphates.. In terms of biological role, bidirectionally degrades single-stranded DNA into large acid-insoluble oligonucleotides, which are then degraded further into small acid-soluble oligonucleotides. In Synechococcus elongatus (strain ATCC 33912 / PCC 7942 / FACHB-805) (Anacystis nidulans R2), this protein is Exodeoxyribonuclease 7 small subunit.